A 558-amino-acid chain; its full sequence is 2-isopropylmalate synthase (558 aa).

Residues 31-306 enclose the Pyruvate carboxyltransferase domain; the sequence is PIWCAVDLRD…DPGIDFSNID (276 aa). Residues Asp-40, His-245, His-247, and Asn-281 each coordinate Mg(2+). The segment at 440–558 is regulatory domain; the sequence is AGSPYSFLEH…LCAANHLSDK (119 aa).

Belongs to the alpha-IPM synthase/homocitrate synthase family. LeuA type 2 subfamily. Homodimer. The cofactor is Mg(2+).

The protein resides in the cytoplasm. It carries out the reaction 3-methyl-2-oxobutanoate + acetyl-CoA + H2O = (2S)-2-isopropylmalate + CoA + H(+). The protein operates within amino-acid biosynthesis; L-leucine biosynthesis; L-leucine from 3-methyl-2-oxobutanoate: step 1/4. In terms of biological role, catalyzes the condensation of the acetyl group of acetyl-CoA with 3-methyl-2-oxobutanoate (2-ketoisovalerate) to form 3-carboxy-3-hydroxy-4-methylpentanoate (2-isopropylmalate). The chain is 2-isopropylmalate synthase from Rhodospirillum rubrum (strain ATCC 11170 / ATH 1.1.1 / DSM 467 / LMG 4362 / NCIMB 8255 / S1).